Reading from the N-terminus, the 378-residue chain is Erythronate-4-phosphate dehydrogenase (378 aa).

Positions 45 and 66 each coordinate substrate. NAD(+)-binding residues include Asp146 and Thr175. Arg208 is an active-site residue. Residue Asp232 coordinates NAD(+). Residue Glu237 is part of the active site. Catalysis depends on His254, which acts as the Proton donor. Gly257 is a binding site for NAD(+). Tyr258 contacts substrate.

It belongs to the D-isomer specific 2-hydroxyacid dehydrogenase family. PdxB subfamily. In terms of assembly, homodimer.

It is found in the cytoplasm. The enzyme catalyses 4-phospho-D-erythronate + NAD(+) = (R)-3-hydroxy-2-oxo-4-phosphooxybutanoate + NADH + H(+). It functions in the pathway cofactor biosynthesis; pyridoxine 5'-phosphate biosynthesis; pyridoxine 5'-phosphate from D-erythrose 4-phosphate: step 2/5. Catalyzes the oxidation of erythronate-4-phosphate to 3-hydroxy-2-oxo-4-phosphonooxybutanoate. The sequence is that of Erythronate-4-phosphate dehydrogenase from Shigella flexneri serotype 5b (strain 8401).